The sequence spans 386 residues: Demethylsterigmatocystin 6-O-methyltransferase (386 aa).

Residue 137–150 (FDISGPCTQILPDF) participates in substrate binding. The segment at 177-197 (MFEWMPQHPKHMESLGHLMAL) is substrate binding. S-adenosyl-L-methionine-binding positions include 228–229 (GG), D253, 273–274 (NF), and R289. The active-site Proton acceptor is H293.

Belongs to the class I-like SAM-binding methyltransferase superfamily. Cation-independent O-methyltransferase family. COMT subfamily.

The catalysed reaction is 6-demethylsterigmatocystin + S-adenosyl-L-methionine = sterigmatocystin + S-adenosyl-L-homocysteine + H(+). Its pathway is mycotoxin biosynthesis; aflatoxin biosynthesis. Functionally, demethylsterigmatocystin 6-O-methyltransferase; part of the gene cluster that mediates the biosynthesis of aflatoxins, a group of polyketide-derived furanocoumarins, and part of the most toxic and carcinogenic compounds among the known mycotoxins. The four major aflatoxins produced by A.parasiticus are aflatoxin B1 (AFB1), aflatoxin B2 (AFB2), aflatoxin G1 (AFG1) and aflatoxin G2 (AFG2). Within the aflatoxin pathway, the methyltransferase aflO then catalyzes the modification of demethylsterigmatocystin (DMST) to sterigmatocystin (ST), and of dihydrodemethylsterigmatocystin (DMDHST) to dihydrosterigmatocystin (DHST). The biosynthesis of aflatoxins begins with the norsolorinic acid synthase aflC that combines a hexanoyl starter unit produced by the fatty acid synthase aflA/aflB and 7 malonyl-CoA extender units to synthesize the precursor NOR. The second step is the conversion of NOR to averantin and requires the norsolorinic acid ketoreductase aflD, which catalyzes the dehydration of norsolorinic acid to form (1'S)-averantin. The norsolorinic acid reductases aflE and aflF may also play a role in the conversion of NOR to AVN. The cytochrome P450 monooxygenase aflG then catalyzes the hydroxylation of AVN to 5'hydroxyaverantin (HAVN). The next step is performed by the 5'-hydroxyaverantin dehydrogenase aflH that transforms HAVN to 5'-oxoaverantin (OAVN) which is further converted to averufin (AVF) by aflK that plays a dual role in the pathway, as a 5'-oxoaverantin cyclase that mediates conversion of 5'-oxoaverantin, as well as a versicolorin B synthase in a later step in the pathway. The averufin oxidase aflI catalyzes the conversion of AVF to versiconal hemiacetal acetate (VHA). VHA is then the substrate for the versiconal hemiacetal acetate esterase aflJ to yield versiconal (VAL). Versicolorin B synthase aflK then converts VAL to versicolorin B (VERB) by closing the bisfuran ring of aflatoxin which is required for DNA-binding, thus giving to aflatoxin its activity as a mutagen. Then, the activity of the versicolorin B desaturase aflL leads to versicolorin A (VERA). A branch point starts from VERB since it can also be converted to dihydrodemethylsterigmatocystin (DMDHST), probably also by aflL, VERA being a precursor for aflatoxins B1 and G1, and DMDHST for aflatoxins B2 and G2. Next, the versicolorin reductase aflM and the cytochrome P450 monooxygenase aflN are involved in conversion of VERA to demethylsterigmatocystin (DMST). AflX and aflY seem also involved in this step, through probable aflX-mediated epoxide ring-opening step following versicolorin A oxidation and aflY-mediated Baeyer-Villiger oxidation required for the formation of the xanthone ring. The methyltransferase aflO then leads to the modification of DMST to sterigmatocystin (ST), and of DMDHST to dihydrosterigmatocystin (DHST). Both ST and DHST are then substrates of the O-methyltransferase aflP to yield O-methylsterigmatocystin (OMST) and dihydro-O-methylsterigmatocystin (DHOMST), respectively. Finally OMST is converted to aflatoxins B1 and G1, and DHOMST to aflatoxins B2 and G2, via the action of several enzymes including O-methylsterigmatocystin oxidoreductase aflQ, the cytochrome P450 monooxygenase aflU, but also the NADH-dependent flavin oxidoreductase nadA which is specifically required for the synthesis of AFG1. This chain is Demethylsterigmatocystin 6-O-methyltransferase, found in Aspergillus parasiticus (strain ATCC 56775 / NRRL 5862 / SRRC 143 / SU-1).